Reading from the N-terminus, the 119-residue chain is Ribonuclease P protein component (119 aa).

It belongs to the RnpA family. Consists of a catalytic RNA component (M1 or rnpB) and a protein subunit.

The enzyme catalyses Endonucleolytic cleavage of RNA, removing 5'-extranucleotides from tRNA precursor.. RNaseP catalyzes the removal of the 5'-leader sequence from pre-tRNA to produce the mature 5'-terminus. It can also cleave other RNA substrates such as 4.5S RNA. The protein component plays an auxiliary but essential role in vivo by binding to the 5'-leader sequence and broadening the substrate specificity of the ribozyme. In Mycobacterium avium (strain 104), this protein is Ribonuclease P protein component.